A 78-amino-acid chain; its full sequence is Dermaseptin-B1 (78 aa).

The N-terminal stretch at 1 to 22 is a signal peptide; that stretch reads MDILKKSLFLVLFLGLVSLSIC. The propeptide occupies 23-42; the sequence is EEEKRENEDEEKQDDEQSEM. A Glutamine amide modification is found at Q75. Positions 76–78 are excised as a propeptide; that stretch reads GEQ.

Belongs to the frog skin active peptide (FSAP) family. Dermaseptin subfamily. Expressed by the skin glands.

It localises to the secreted. Its function is as follows. Possesses a potent antimicrobial activity against bacteria, fungi and protozoa. Probably acts by disturbing membrane functions with its amphipathic structure. The sequence is that of Dermaseptin-B1 from Phyllomedusa bicolor (Two-colored leaf frog).